Consider the following 257-residue polypeptide: Aspartate/glutamate leucyltransferase (257 aa).

The protein belongs to the R-transferase family. Bpt subfamily.

The protein resides in the cytoplasm. The catalysed reaction is N-terminal L-glutamyl-[protein] + L-leucyl-tRNA(Leu) = N-terminal L-leucyl-L-glutamyl-[protein] + tRNA(Leu) + H(+). It catalyses the reaction N-terminal L-aspartyl-[protein] + L-leucyl-tRNA(Leu) = N-terminal L-leucyl-L-aspartyl-[protein] + tRNA(Leu) + H(+). Functionally, functions in the N-end rule pathway of protein degradation where it conjugates Leu from its aminoacyl-tRNA to the N-termini of proteins containing an N-terminal aspartate or glutamate. This is Aspartate/glutamate leucyltransferase from Rhodopseudomonas palustris (strain BisB5).